Consider the following 206-residue polypeptide: High frequency lysogenization protein HflD homolog (206 aa).

This sequence belongs to the HflD family.

The protein resides in the cytoplasm. The protein localises to the cell inner membrane. The protein is High frequency lysogenization protein HflD homolog of Pseudomonas syringae pv. syringae (strain B728a).